A 461-amino-acid polypeptide reads, in one-letter code: MSSDKAKAFDAQFPTYKSEFQIPTFESLGIQNSKYSPETNSIYLCGNSLGLMPRNTTELINRELQAWSSRGVEAHFNHSHPQGTDWVDIDLPLLPLLAPLVGAKQNEVAVMGSLTSNLNALLIHFYKPKGKRTKILFEKQAFPSDYYAFLNIVQVFGYDASHLIQIEIPKGETYIKTETILDVFDKYEDEIAIVCLPGIQYYTGQFFDIAKITKHVKTSAPDVVVGWDLAHAVGNVPLSLHDWGVDFAAWCSYKYLNAGPGAIAGIFVNEKYTEQNKPENYKPRLAGWWGNNSSQRFQMLEKFDPIASALSYRQLNPSVLDCVALKSSLEIFNKVGGMLSLRDKSLAMTQFLQDILTKSNYYIEQGETDVNKFGFKIITPLDPNQRGCQLSLLFQPHRDEKKQNVMERVFEYLHQHAIICDERRPDVIRLAPLPLYNTFEETRIGATRLLEALEAIKDDYI.

Pyridoxal 5'-phosphate contacts are provided by residues leucine 114, threonine 115, 142–145 (FPSD), aspartate 228, histidine 231, and tyrosine 253. Lysine 254 is modified (N6-(pyridoxal phosphate)lysine). 2 residues coordinate pyridoxal 5'-phosphate: tryptophan 288 and asparagine 316.

It belongs to the kynureninase family. Homodimer. Pyridoxal 5'-phosphate serves as cofactor.

The protein resides in the cytoplasm. It carries out the reaction L-kynurenine + H2O = anthranilate + L-alanine + H(+). The enzyme catalyses 3-hydroxy-L-kynurenine + H2O = 3-hydroxyanthranilate + L-alanine + H(+). Its pathway is amino-acid degradation; L-kynurenine degradation; L-alanine and anthranilate from L-kynurenine: step 1/1. It participates in cofactor biosynthesis; NAD(+) biosynthesis; quinolinate from L-kynurenine: step 2/3. In terms of biological role, catalyzes the cleavage of L-kynurenine (L-Kyn) and L-3-hydroxykynurenine (L-3OHKyn) into anthranilic acid (AA) and 3-hydroxyanthranilic acid (3-OHAA), respectively. In Lodderomyces elongisporus (strain ATCC 11503 / CBS 2605 / JCM 1781 / NBRC 1676 / NRRL YB-4239) (Yeast), this protein is Kynureninase.